The chain runs to 363 residues: Flagellar P-ring protein 2 (363 aa).

Positions 1–18 (MLIRLLLLVICLAGPGVA) are cleaved as a signal peptide.

Belongs to the FlgI family. In terms of assembly, the basal body constitutes a major portion of the flagellar organelle and consists of four rings (L,P,S, and M) mounted on a central rod.

It localises to the periplasm. Its subcellular location is the bacterial flagellum basal body. Its function is as follows. Assembles around the rod to form the L-ring and probably protects the motor/basal body from shearing forces during rotation. This Cereibacter sphaeroides (strain ATCC 17023 / DSM 158 / JCM 6121 / CCUG 31486 / LMG 2827 / NBRC 12203 / NCIMB 8253 / ATH 2.4.1.) (Rhodobacter sphaeroides) protein is Flagellar P-ring protein 2.